A 38-amino-acid chain; its full sequence is Large ribosomal subunit protein bL36B (38 aa).

This sequence belongs to the bacterial ribosomal protein bL36 family.

The chain is Large ribosomal subunit protein bL36B from Prochlorococcus marinus (strain MIT 9515).